Here is a 514-residue protein sequence, read N- to C-terminus: Cytochrome P450 71AP13 (514 aa).

Residues 20–37 (HSSLFAFSLLILLLKFIY) form a helical membrane-spanning segment. 2 N-linked (GlcNAc...) asparagine glycosylation sites follow: Asn127 and Asn184. Cys455 serves as a coordination point for heme.

Belongs to the cytochrome P450 family. Requires heme as cofactor. Expressed in fruit kernel, seedlings, leaves and stems.

The protein localises to the membrane. This Prunus mume (Japanese apricot) protein is Cytochrome P450 71AP13.